A 141-amino-acid polypeptide reads, in one-letter code: ATP synthase epsilon chain, chloroplastic (141 aa).

It belongs to the ATPase epsilon chain family. F-type ATPases have 2 components, F(1) - the catalytic core - and F(0) - the membrane proton channel. F(1) has five subunits: alpha(3), beta(3), gamma(1), delta(1), epsilon(1). F(0) has four main subunits: a(1), b(1), b'(1) and c(10-14). The alpha and beta chains form an alternating ring which encloses part of the gamma chain. F(1) is attached to F(0) by a central stalk formed by the gamma and epsilon chains, while a peripheral stalk is formed by the delta, b and b' chains.

Its subcellular location is the plastid. It is found in the chloroplast thylakoid membrane. F(1)F(0) ATP synthase produces ATP from ADP in the presence of a proton or sodium gradient. F-type ATPases consist of two structural domains, F(1) containing the extramembraneous catalytic core and F(0) containing the membrane proton channel, linked together by a central stalk and a peripheral stalk. During catalysis, ATP synthesis in the catalytic domain of F(1) is coupled via a rotary mechanism of the central stalk subunits to proton translocation. The protein is ATP synthase epsilon chain, chloroplastic of Chlamydomonas reinhardtii (Chlamydomonas smithii).